Here is a 1188-residue protein sequence, read N- to C-terminus: Spermatogenesis-associated protein 31C1 (1188 aa).

The chain crosses the membrane as a helical span at residues 23-43 (PWVLDIFLTLVFALGLFFLLL). Disordered regions lie at residues 57-92 (PSPRKRKRHLVSQRHLVSQCPTGRRGRPRGRMKNHS), 121-249 (LEKG…LLTP), 483-510 (PGTSQAKGKPRPWQSSTSTGESSKEAQT), 530-567 (TPQNLSRGMESFPGKVLGATSEESERNLRKPLRSDSGS), 733-813 (MPER…PTVP), 934-1013 (NMGH…PSIS), 1121-1143 (QQATLKNQSRPNRDRQIRDQQPL), and 1155-1188 (LRHPQLLLPKKAVSPVSPPQHRPKTPSASSHHHH). Basic residues-rich tracts occupy residues 59–68 (PRKRKRHLVS) and 80–92 (RRGRPRGRMKNHS). A compositionally biased stretch (basic and acidic residues) spans 138 to 154 (VGKRTPDGASRSSHEPM). Residues 191 to 207 (SSLSASQPPEPSLLLER) show a composition bias toward low complexity. Pro residues predominate over residues 210-241 (PEPPALFPHPPHTPDPLACSPPPPKGFTPPPL). The span at 495–510 (WQSSTSTGESSKEAQT) shows a compositional bias: polar residues. Polar residues-rich tracts occupy residues 783–800 (LKGSTQQSRSLGAQSSRA) and 943–954 (PNCQGSCKSQSP). The segment covering 960–976 (HKRENSRKPNLEKHEEM) has biased composition (basic and acidic residues). Residues 1121 to 1130 (QQATLKNQSR) show a composition bias toward polar residues.

The protein belongs to the SPATA31 family.

The protein resides in the membrane. Functionally, may play a role in spermatogenesis. The chain is Spermatogenesis-associated protein 31C1 (SPATA31C1) from Homo sapiens (Human).